The following is a 475-amino-acid chain: MADKIDISLYEKARIVVYGDIMLDRYWYGQASRISPEAPIPVVNVDQIEARPGGAANVALNVAALGASVELMGVVGDDQESRELETLLNKKSINCHFHRLNDHPTVTKLRVLGQNQQLLRLDFEKTLKHYEDKGLLQRYQHSLSHAQAVILSDYAKGALFNVTAPIQRAREKGLPVLVDPKSVDFSRYAGATLLTPNLKEFEAVVGHCRTDQELEFKARALIHQYRFEAILITRGKQGMMLIQKEGAAINLVAHAREVYDVTGAGDTVIAVMAASLAAGGDFYEAAQLANLAAGLVVRKLGAATVTVPELRRALHQITASHHGILSEKALLLAVADARAHGETIVMTNGCFDILHAGHVHYLEAAKAMGHRLIVAVNDDNSVRRLKGKDRPINSLQARMEVLTALRAIDWVVPFSEDTPARLITEVLPNILVKGGDYQPSQIAGGDEVVKNGGKVLTIPIKEGFSTSRLVEKMLN.

The tract at residues 1–321 is ribokinase; sequence MADKIDISLY…RALHQITASH (321 aa). 197–200 is a binding site for ATP; sequence NLKE. Aspartate 266 is a catalytic residue. Residues 346-475 are cytidylyltransferase; it reads MTNGCFDILH…TSRLVEKMLN (130 aa).

It in the N-terminal section; belongs to the carbohydrate kinase PfkB family. This sequence in the C-terminal section; belongs to the cytidylyltransferase family. Homodimer.

It catalyses the reaction D-glycero-beta-D-manno-heptose 7-phosphate + ATP = D-glycero-beta-D-manno-heptose 1,7-bisphosphate + ADP + H(+). The enzyme catalyses D-glycero-beta-D-manno-heptose 1-phosphate + ATP + H(+) = ADP-D-glycero-beta-D-manno-heptose + diphosphate. The protein operates within nucleotide-sugar biosynthesis; ADP-L-glycero-beta-D-manno-heptose biosynthesis; ADP-L-glycero-beta-D-manno-heptose from D-glycero-beta-D-manno-heptose 7-phosphate: step 1/4. Its pathway is nucleotide-sugar biosynthesis; ADP-L-glycero-beta-D-manno-heptose biosynthesis; ADP-L-glycero-beta-D-manno-heptose from D-glycero-beta-D-manno-heptose 7-phosphate: step 3/4. Functionally, catalyzes the phosphorylation of D-glycero-D-manno-heptose 7-phosphate at the C-1 position to selectively form D-glycero-beta-D-manno-heptose-1,7-bisphosphate. Catalyzes the ADP transfer from ATP to D-glycero-beta-D-manno-heptose 1-phosphate, yielding ADP-D-glycero-beta-D-manno-heptose. The chain is Bifunctional protein HldE from Coxiella burnetii (strain RSA 331 / Henzerling II).